Reading from the N-terminus, the 328-residue chain is Lateral signaling target 1 protein (328 aa).

3 disordered regions span residues 56-78 (SSQD…GLRS), 108-135 (PTHY…SASS), and 177-200 (PVQP…RLNG). Residues 178–200 (VQPSTSTSRNNVSQISGSSRLNG) show a composition bias toward polar residues.

As to quaternary structure, interacts with fbf-2; the interaction probably mediates the release of the C-terminal tail of fbf-2 from the RNA-binding domain, thereby altering its RNA-binding affinity.

In terms of biological role, plays a role in germline stem cell maintenance, perhaps acting in concert with mRNA-binding factor fbf-2. May regulate fbf-2 by modulating RNA-binding and perhaps by competition with the intramolecular interaction between the fbf-2 RNA-binding domain and C-terminal tail. The protein is Lateral signaling target 1 protein of Caenorhabditis elegans.